Here is a 67-residue protein sequence, read N- to C-terminus: Envelope small membrane protein (67 aa).

A lipid anchor (N-myristoyl glycine; by host) is attached at glycine 2. Positions 2–15 (GLVWSLISNSIQTI) are endoplasmic reticulum retention signal. Topologically, residues 2-27 (GLVWSLISNSIQTIIADFAISVIDAA) are virion surface. Residues 28–48 (LFFLMLLALAVVTVFLFWLIV) traverse the membrane as a helical segment. Topologically, residues 49–67 (AIGRSLVARCSRGARYRPV) are intravirion.

The protein belongs to the arteriviridae E protein family. In terms of assembly, homomultimer. Associates with itself into higher-order structures, including dimers, trimers and tetramers. Associates with the GP2b-GP3-GP4 complex. In terms of processing, myristoylated. Post-translationally, not glycosylated.

It is found in the virion membrane. The protein resides in the host endoplasmic reticulum membrane. The protein localises to the host Golgi apparatus membrane. Its subcellular location is the secreted. Its function is as follows. Minor envelope protein. May function as a viroporin in the virion envelope that facilitates uncoating of the virus in order to release the genomic RNA into the cytoplasm for subsequent replication. The polypeptide is Envelope small membrane protein (GP2a) (Equidae (horses)).